A 349-amino-acid polypeptide reads, in one-letter code: Anthranilate phosphoribosyltransferase (349 aa).

Residues G82, 85-86 (GD), 92-95 (NVST), 110-118 (KHGNRGVSS), and S122 contribute to the 5-phospho-alpha-D-ribose 1-diphosphate site. G82 contacts anthranilate. Residue S94 coordinates Mg(2+). N113 contributes to the anthranilate binding site. R168 serves as a coordination point for anthranilate. Residues D227 and E228 each coordinate Mg(2+).

The protein belongs to the anthranilate phosphoribosyltransferase family. As to quaternary structure, homodimer. Mg(2+) serves as cofactor.

It catalyses the reaction N-(5-phospho-beta-D-ribosyl)anthranilate + diphosphate = 5-phospho-alpha-D-ribose 1-diphosphate + anthranilate. The protein operates within amino-acid biosynthesis; L-tryptophan biosynthesis; L-tryptophan from chorismate: step 2/5. Its function is as follows. Catalyzes the transfer of the phosphoribosyl group of 5-phosphorylribose-1-pyrophosphate (PRPP) to anthranilate to yield N-(5'-phosphoribosyl)-anthranilate (PRA). The polypeptide is Anthranilate phosphoribosyltransferase (Acinetobacter baylyi (strain ATCC 33305 / BD413 / ADP1)).